Here is a 483-residue protein sequence, read N- to C-terminus: tRNA sulfurtransferase (483 aa).

Positions 63–167 (GQLIDMLART…DDQVYLVTKK (105 aa)) constitute a THUMP domain. Residues 185–186 (LI), Lys267, Gly289, and Gln298 contribute to the ATP site. Residues Cys346 and Cys457 are joined by a disulfide bond. The region spanning 405–483 (LPVSAKVIDI…GYTNVGVYRP (79 aa)) is the Rhodanese domain. Cys457 functions as the Cysteine persulfide intermediate in the catalytic mechanism.

This sequence belongs to the ThiI family.

It is found in the cytoplasm. The catalysed reaction is [ThiI sulfur-carrier protein]-S-sulfanyl-L-cysteine + a uridine in tRNA + 2 reduced [2Fe-2S]-[ferredoxin] + ATP + H(+) = [ThiI sulfur-carrier protein]-L-cysteine + a 4-thiouridine in tRNA + 2 oxidized [2Fe-2S]-[ferredoxin] + AMP + diphosphate. It catalyses the reaction [ThiS sulfur-carrier protein]-C-terminal Gly-Gly-AMP + S-sulfanyl-L-cysteinyl-[cysteine desulfurase] + AH2 = [ThiS sulfur-carrier protein]-C-terminal-Gly-aminoethanethioate + L-cysteinyl-[cysteine desulfurase] + A + AMP + 2 H(+). It functions in the pathway cofactor biosynthesis; thiamine diphosphate biosynthesis. Functionally, catalyzes the ATP-dependent transfer of a sulfur to tRNA to produce 4-thiouridine in position 8 of tRNAs, which functions as a near-UV photosensor. Also catalyzes the transfer of sulfur to the sulfur carrier protein ThiS, forming ThiS-thiocarboxylate. This is a step in the synthesis of thiazole, in the thiamine biosynthesis pathway. The sulfur is donated as persulfide by IscS. In Saccharophagus degradans (strain 2-40 / ATCC 43961 / DSM 17024), this protein is tRNA sulfurtransferase.